The chain runs to 332 residues: Acryloyl-coenzyme A reductase (332 aa).

Cys-38 contacts Zn(2+). Position 39 (Tyr-39) interacts with NADP(+). Residues His-60, Asp-90, Cys-93, Cys-96, Cys-104, and Cys-146 each coordinate Zn(2+). NADP(+) is bound by residues 172–175 (SGGV) and 194–196 (TTS).

Belongs to the zinc-containing alcohol dehydrogenase family. As to quaternary structure, monomer. Zn(2+) is required as a cofactor.

It catalyses the reaction propanoyl-CoA + NADP(+) = acryloyl-CoA + NADPH + H(+). Functionally, plays a role in autotrophic carbon fixation via the 3-hydroxypropionate/4-hydroxybutyrate cycle. Catalyzes the acryloyl-CoA dependent NADPH oxidation and formation of propionyl-CoA. The polypeptide is Acryloyl-coenzyme A reductase (Metallosphaera sedula (strain ATCC 51363 / DSM 5348 / JCM 9185 / NBRC 15509 / TH2)).